Reading from the N-terminus, the 122-residue chain is Prefoldin subunit 1 (122 aa).

It belongs to the prefoldin subunit beta family. As to quaternary structure, heterohexamer of two PFD-alpha type and four PFD-beta type subunits.

Binds specifically to cytosolic chaperonin (c-CPN) and transfers target proteins to it. Binds to nascent polypeptide chain and promotes folding in an environment in which there are many competing pathways for nonnative proteins. The protein is Prefoldin subunit 1 (pfdn1) of Danio rerio (Zebrafish).